Reading from the N-terminus, the 247-residue chain is Adenosylcobinamide-GDP ribazoletransferase (247 aa).

A run of 6 helical transmembrane segments spans residues 31–51 (VVWFPAAGLVVGAAVALAAAL), 57–77 (PWLGALAGVVMWAWITGGLHL), 109–129 (FGVIVLVLQLAAKLVLLHWLL), 136–156 (PALVLIPAWTRWAAAGWTLLL), 189–209 (ITPIAFVALIPAVLWGVWMWL), and 218–238 (ILGAGIEWSESAALLLAGVSL).

Belongs to the CobS family. Mg(2+) is required as a cofactor.

The protein resides in the cell inner membrane. The enzyme catalyses alpha-ribazole + adenosylcob(III)inamide-GDP = adenosylcob(III)alamin + GMP + H(+). It catalyses the reaction alpha-ribazole 5'-phosphate + adenosylcob(III)inamide-GDP = adenosylcob(III)alamin 5'-phosphate + GMP + H(+). It functions in the pathway cofactor biosynthesis; adenosylcobalamin biosynthesis; adenosylcobalamin from cob(II)yrinate a,c-diamide: step 7/7. In terms of biological role, joins adenosylcobinamide-GDP and alpha-ribazole to generate adenosylcobalamin (Ado-cobalamin). Also synthesizes adenosylcobalamin 5'-phosphate from adenosylcobinamide-GDP and alpha-ribazole 5'-phosphate. The protein is Adenosylcobinamide-GDP ribazoletransferase of Thiobacillus denitrificans (strain ATCC 25259 / T1).